Here is a 140-residue protein sequence, read N- to C-terminus: uncharacterized protein (140 aa).

This sequence belongs to the peptidase S24 family.

This is an uncharacterized protein from Haemophilus influenzae (strain ATCC 51907 / DSM 11121 / KW20 / Rd).